Consider the following 451-residue polypeptide: Glutamyl-tRNA(Gln) amidotransferase subunit D (451 aa).

Residues 78 to 97 are disordered; it reads PREAPTPGEEEGSQEDFGQP. The Asparaginase/glutaminase domain occupies 99–432; the sequence is PRVFFVGTGG…EEIQRLFTAN (334 aa). Catalysis depends on residues threonine 109, threonine 187, aspartate 188, and lysine 266.

The protein belongs to the asparaginase 1 family. GatD subfamily. In terms of assembly, heterodimer of GatD and GatE.

It catalyses the reaction L-glutamyl-tRNA(Gln) + L-glutamine + ATP + H2O = L-glutaminyl-tRNA(Gln) + L-glutamate + ADP + phosphate + H(+). In terms of biological role, allows the formation of correctly charged Gln-tRNA(Gln) through the transamidation of misacylated Glu-tRNA(Gln) in organisms which lack glutaminyl-tRNA synthetase. The reaction takes place in the presence of glutamine and ATP through an activated gamma-phospho-Glu-tRNA(Gln). The GatDE system is specific for glutamate and does not act on aspartate. The polypeptide is Glutamyl-tRNA(Gln) amidotransferase subunit D (Thermofilum pendens (strain DSM 2475 / Hrk 5)).